Here is a 137-residue protein sequence, read N- to C-terminus: Peptide methionine sulfoxide reductase MsrB (137 aa).

The MsrB domain maps to 7-129; it reads PTENIEKLSD…NSASLNFVDD (123 aa). Zn(2+) is bound by residues C46, C49, C95, and C98. Residue C118 is the Nucleophile of the active site.

This sequence belongs to the MsrB Met sulfoxide reductase family. Requires Zn(2+) as cofactor.

It carries out the reaction L-methionyl-[protein] + [thioredoxin]-disulfide + H2O = L-methionyl-(R)-S-oxide-[protein] + [thioredoxin]-dithiol. This is Peptide methionine sulfoxide reductase MsrB from Yersinia pseudotuberculosis serotype O:1b (strain IP 31758).